Consider the following 300-residue polypeptide: UDP-N-acetylenolpyruvoylglucosamine reductase (300 aa).

The 190-residue stretch at 27 to 216 (RVGGPADVIF…TERREKTQPI (190 aa)) folds into the FAD-binding PCMH-type domain. The active site involves Arg172. Ser223 functions as the Proton donor in the catalytic mechanism. Residue Glu293 is part of the active site.

This sequence belongs to the MurB family. It depends on FAD as a cofactor.

The protein resides in the cytoplasm. The catalysed reaction is UDP-N-acetyl-alpha-D-muramate + NADP(+) = UDP-N-acetyl-3-O-(1-carboxyvinyl)-alpha-D-glucosamine + NADPH + H(+). The protein operates within cell wall biogenesis; peptidoglycan biosynthesis. Its function is as follows. Cell wall formation. In Phenylobacterium zucineum (strain HLK1), this protein is UDP-N-acetylenolpyruvoylglucosamine reductase.